The sequence spans 240 residues: Protein Thf1 (240 aa).

Positions 186 to 222 form a coiled coil; it reads KDLDLYRSNLEKVDQLLKVLEDAAEAERKKKEKQAAS. The disordered stretch occupies residues 212–240; that stretch reads ERKKKEKQAASTTPAIEEAPVTTAESSES.

It belongs to the THF1 family.

In terms of biological role, may be involved in photosynthetic membrane biogenesis. This is Protein Thf1 from Synechocystis sp. (strain ATCC 27184 / PCC 6803 / Kazusa).